The following is a 387-amino-acid chain: S-adenosylmethionine synthase (387 aa).

Glu8 contacts Mg(2+). Residue His14 participates in ATP binding. Glu42 is a K(+) binding site. Positions 55 and 98 each coordinate L-methionine. ATP contacts are provided by residues 166–168, 234–237, Asp245, 251–252, Ala268, Lys272, and Lys276; these read DGK, SGRF, and RK. Residue Asp245 coordinates L-methionine. Lys276 provides a ligand contact to L-methionine.

The protein belongs to the AdoMet synthase family. In terms of assembly, homotetramer. It depends on Mn(2+) as a cofactor. Requires Mg(2+) as cofactor. The cofactor is Co(2+). K(+) serves as cofactor.

The protein resides in the cytoplasm. The catalysed reaction is L-methionine + ATP + H2O = S-adenosyl-L-methionine + phosphate + diphosphate. It functions in the pathway amino-acid biosynthesis; S-adenosyl-L-methionine biosynthesis; S-adenosyl-L-methionine from L-methionine: step 1/1. Its function is as follows. Catalyzes the formation of S-adenosylmethionine from methionine and ATP. The reaction comprises two steps that are both catalyzed by the same enzyme: formation of S-adenosylmethionine (AdoMet) and triphosphate, and subsequent hydrolysis of the triphosphate. The sequence is that of S-adenosylmethionine synthase (METK-1) from Ostreococcus lucimarinus (strain CCE9901).